A 406-amino-acid polypeptide reads, in one-letter code: Pyruvate dehydrogenase E1 component subunit beta-3, chloroplastic (406 aa).

The transit peptide at 1 to 70 directs the protein to the chloroplast; sequence MSAILQGAGA…PLIPNAVTTK (70 aa). Residue E142 coordinates thiamine diphosphate. Residues V195, A243, I244, and N248 each coordinate K(+).

As to quaternary structure, tetramer of 2 alpha and 2 beta subunits. It depends on thiamine diphosphate as a cofactor.

The protein localises to the plastid. It is found in the chloroplast. It carries out the reaction N(6)-[(R)-lipoyl]-L-lysyl-[protein] + pyruvate + H(+) = N(6)-[(R)-S(8)-acetyldihydrolipoyl]-L-lysyl-[protein] + CO2. Its function is as follows. The pyruvate dehydrogenase complex catalyzes the overall conversion of pyruvate to acetyl-CoA and CO(2). It contains multiple copies of three enzymatic components: pyruvate dehydrogenase (E1), dihydrolipoamide acetyltransferase (E2) and lipoamide dehydrogenase (E3). The protein is Pyruvate dehydrogenase E1 component subunit beta-3, chloroplastic (E1-BETA-2) of Arabidopsis thaliana (Mouse-ear cress).